A 451-amino-acid polypeptide reads, in one-letter code: MRECISIHIGQAGIQVGNACWELYCLEHGIQPDGQMPGDKTVGGGDDAFNTFFSETGAGKHVPRAVFVDLEPTVIDEVRTGAYRQLFHPEQLISGKEDAANNFARGHYTIGKEIVDLCLDRIRKLSDNCTGLQGFLVFNAVGGGTGSGLGSLLLERLSVDYGKKSKLGFTVYPSPQVSTSVVEPYNSVLSTHSLLEHTDVSILLDNEAIYDICRRSLDIERPTYTNLNRLVSQVISSLTASLRFDGALNVDVNEFQTNLVPYPRIHFMLSSYAPVISAEKAYHEQLSVAEITNSAFEPSSMMAKCDPRHGKYMACCLMYRGDVVPKDVNAAVATIKTKRTIQFVDWCPTGFKCGINYQPPGVVPGGDLAKVQRAVCMISNSTSVVEVFSRIDHKFDLMYAKRAFVHWYVGEGMEEGEFSEAREDLAALEKDYEEVGAEFDDGEDGDEGDEY.

Gln11 contacts GTP. Lys40 bears the N6-acetyllysine mark. The GTP site is built by Glu71, Gly144, Thr145, Thr179, Asn206, and Asn228. Glu71 contacts Mg(2+). Glu254 is a catalytic residue.

It belongs to the tubulin family. As to quaternary structure, dimer of alpha and beta chains. A typical microtubule is a hollow water-filled tube with an outer diameter of 25 nm and an inner diameter of 15 nM. Alpha-beta heterodimers associate head-to-tail to form protofilaments running lengthwise along the microtubule wall with the beta-tubulin subunit facing the microtubule plus end conferring a structural polarity. Microtubules usually have 13 protofilaments but different protofilament numbers can be found in some organisms and specialized cells. Mg(2+) is required as a cofactor. Undergoes a tyrosination/detyrosination cycle, the cyclic removal and re-addition of a C-terminal tyrosine residue by the enzymes tubulin tyrosine carboxypeptidase (TTCP) and tubulin tyrosine ligase (TTL), respectively. In terms of processing, acetylation of alpha chains at Lys-40 stabilizes microtubules and affects affinity and processivity of microtubule motors. This modification has a role in multiple cellular functions, ranging from cell motility, cell cycle progression or cell differentiation to intracellular trafficking and signaling.

It is found in the cytoplasm. The protein localises to the cytoskeleton. It carries out the reaction GTP + H2O = GDP + phosphate + H(+). In terms of biological role, tubulin is the major constituent of microtubules, a cylinder consisting of laterally associated linear protofilaments composed of alpha- and beta-tubulin heterodimers. Microtubules grow by the addition of GTP-tubulin dimers to the microtubule end, where a stabilizing cap forms. Below the cap, tubulin dimers are in GDP-bound state, owing to GTPase activity of alpha-tubulin. The sequence is that of Tubulin alpha-2 chain (TUBA2) from Hordeum vulgare (Barley).